A 225-amino-acid chain; its full sequence is Cell division protein SepF (225 aa).

The tract at residues 22 to 116 (EYLDEPEPAR…TRGALAVDTR (95 aa)) is disordered. Basic and acidic residues-rich tracts occupy residues 28–54 (EPARRPARPARDSGRDPYLDRDDRDFA) and 77–86 (RYDGPRHSSR).

It belongs to the SepF family. In terms of assembly, homodimer. Interacts with FtsZ.

The protein localises to the cytoplasm. Cell division protein that is part of the divisome complex and is recruited early to the Z-ring. Probably stimulates Z-ring formation, perhaps through the cross-linking of FtsZ protofilaments. Its function overlaps with FtsA. The protein is Cell division protein SepF of Rhodococcus jostii (strain RHA1).